The following is a 455-amino-acid chain: T-box protein VegT-A (455 aa).

3 disordered regions span residues S21–D40, R229–E262, and A295–S346. Residues L57 to E230 constitute a DNA-binding region (T-box). Positions R229–L241 are enriched in basic and acidic residues. Over residues G308–N324 the composition is skewed to polar residues.

As to quaternary structure, forms a repression complex on the promoters of the nodal/nr1 and siamois genes with the maternal factors tcf7l1/tcf3 and pouf5.1/oct-25. Interacts (via C-terminus) with tcf7l1/tcf3 (via N-terminus). Also interacts with the other POU-domain transcription factors pou5f1.2/oct-91 and pou5f1.3/oct-60. As to expression, uniformly distributed in stage I oocytes but becomes localized to the vegetal hemisphere by stage II and remains so thereafter throughout oogenesis and the early embryonic cleavage stages. Zygotic expression parallels blastopore formation and shifts from dorsal expression in the marginal zone of late blastula and early gastrula stages to a ventral/lateral expression at the posterior end of later stage embryos. Expression is excluded from the notochord. In tailbud and tadpole stages, expressed exclusively in a subset of posterior Rohon-Beard neurons.

It is found in the nucleus. Transcription factor required for both mesoderm and endoderm formation in the embryo; signaling determinants and concentration levels may determine which germ layer is formed. Acts together with beta-catenin to activate genes that are responsible for mesoderm induction including wnt-8, eomes t/bra, siamois, mix1 and sox17. Directly binds to promoter DNA. Patterns the mesoderm along the dorsoventral and posterior axis. Activates siamois gene transcription when alone or in combination with beta-catenin, but inhibits siamois transcription in combination with pou5f1.1/oct-25. The protein is T-box protein VegT-A (vegt-a) of Xenopus laevis (African clawed frog).